The sequence spans 3598 residues: MEPGILIDERQHIQKKTFTKWINSHLIDTQCTPVKDLFLDLRDGHRLLALLSTLTQTNLKPEKGRMRVHHINNLNKVITEIQQHGVKLVNISSDDIVGGNAKLTLGLIWLIALEFNGQHLVKSHSSNGVEKSLLAWARQYTEPHGLQLNDFSSSWSDGRAFLMILDAHVEELNLQAALQQHALKRLHLAFDLAHRHFKIEKLLDAEDVHTHKPDNKSIQMYVMCLYHAMESMRTRQQEQEQDEGQDQDPGRVPCTSITDLDEVPLDNDQTSLGLYTSDSAGSMEQRSSGELKTHSMRPLSTATNASVEISGYQSALEAVLTLLLEDEQLLSQNLPDPQDFQTAKLQFHENESFMLKLTEHQEYVGEALEEGSNLINESQKAGAGLSQEDQNEVRQQMVLLNERWETLRLRALDVQAKILMRLAEFQKQKLEQLRQFLTSVEDRISHMSDIGPTLEEAEKQLLEAQKLKADLSEQQELVDSLSSMVVIVNDTSGNFNDLEDRLSALGERWSHVVKWSDLRKEKLQQYKCISRWLDAREQDLKLMESRDVTDVGGITQRINELNYCAKDLLELQRYLIDLRQMVAATLQDGDDKGERVLIQLESYEDRLDALKQIVEVQTVRIETKGFNFGRDRASYDDSRVVRPEGWVDYQMIIRFGEDDSQEDDDEHDLASKKRKLRNADNFNALENHIMEHFGYVQEVEQKLQQLQRQSLRQQCELLKELQAENSRRCGTLPELKKLYEVCELEDPSRNLLLEETHIKQLEQRYANLSQKLSSQQSESHTLLAKEKYYNSLTGFKLVLADSRDWYKQHAGSASGNELEQRLSHMESLASEISEAKTATEELDDNLIEWKQDFGLFYDSWHDMKQALQALIQQRGGESLSRQLKQIQDFVTKVSNQKVRVSNLEVMQEQQHFLNQLLDEMESLRLTYDNIPKHLIGEELQTAWNRLPEQLNERVIKQTTAIENLNHFAAEYNAIIAMLRSAADSKLNGSDGASSQDLRKLEIDVISARNFSEILIKEAEPAQKESLQSQIRALNTLYDQVEQVHREKKEQQTVLQSHIDLIQLRLKETDQWLTDLESNTPKSGISDIVNSNELFQSKSRFQTLKETCERETTQFRDLNERGGELLLQMDELQDQDRESRYGSLAKQFTRINARWTEVTELVYAKTALLEHISTQLGEFKKFMVSETGYLDKLENKIRNTPENAADAEEIMEELDDLENVLRSHSEEWLDKIQEIGNELIDNEFMADSIRRDIDETVQRWTQLQQQAKKRTELLEQKVSEAEQSEKCIVQFEKWLTRVDDILSDHLDNDVTIVDQPEEFQRLAHEFVANEKNFKEISELIDEHTRNGKVGAANRLQEQLNLMEVRFKYCQAKLSKCTAIQHSYESRLNRAYTDLRNVERSTEVVDVASAGPNTVQTQYQKCLQIYRTLSEIKSEIESTIKTGRRVCEDRYTKSPKQLSQRIDALKHLYNTLGENVTQSKATLERLLTLARQLEECFDSADNLIRRFESPQEVHDRNSILLEFEDVLRRCEDHYNEYNKSCDQSCMVETRQRIDGLKATYHKLTSADIIKRLTEMKTTLQNLDNISLETLRAMEHDLKEINVPSNPEIEKLQQQVIAIVVDVLKTRFNEATTLAARNTSSPDNDDTEIVVVSDTVRQRRARTPQSGESPSSAHTSSSESPTKGVENSPGAVGDQVMPDLLPPQTFRLAESSTLFSQISLNPQKVTNTPPPKPAKTKRKAPSSPAQVVEIRVKNIQNDKMSVQNIDLEPQQGEIVDTVNILESVEPFVPEYVETVQIVDLSEDSDSSVRVDSQGKEMRRSKSKHSLNETPLPKVSDNDEDSAEQEEDLLRPSAENTSTPFLRVEKRRISFDEKRKRVANERDILRDSEEEEPKTPDTPRAAQVSKPKRWRQLQPEMDALEPESPGRDSFYSPDKESGFDAEPLVFSDDEDIPRFSLEMTSTIDSDSDTSRIMTPSTKNPNPFLSKVLESLSSPVDDSNVTLKSPISEEQPQNLDDRVREFDKQAKQMIYKLKLTKAKIEQCHESEAEDLRLLIAPDAATLISQGDSLVLETHGRQGSISRLVMRTQIILREQFREVQQARSKTSGSGAPAPPLDSVNIEELVTKGLRRINVLIEKTVDLKSSTDLEKRMEDINERHDDLQVIVSAIGKNAQMPKVTPLMMNEIEKTKNNLIAHADSIELSLTELRNGPRISNGKERPDASSAATMSCRSEYNNEPSGTGALAGSFDKSVLQISDWLTWEQNMIKIQSVLVDDGDAVRLAIEKQEKVLRELKMKKPQLNELVHTAEVLKGDVKRQQLQEKELKQFSLAPHCSADLDYMRCCLKVTRLREHWDETSQCVLQRAAQLKNMLSDSQRFEAKRLELEKWLARMEQRAERMGTIATTADILEAQQKEQKSFHAELHQNKQHFDIFNELTQKLIAVYPNDDTTRIKKMTEVINQRYANLNSGVINRGKQLHAAVHSLQSFDRAMDQFLAFLSETETLCENAESDIERNPLMFKDLQSEIETHRVVYDRLDGTGRKLLGSLTSQEDAVMLQRRLDEMNQRWNNLKSKSIAIRNRLESNSEHWNALLLSLRELTEWVIRKDTELSTLGLGPVRGDAVSLQKQLDDHKAFRRQLEDKRPIVESNLTSGRQYIANEAAVSDTSDTEANHDSDSRYMSAEEQSRELTRSIRREVGKLSEQWNNLIDRSDNWKHRLDEYMTKMRQFQKILEDLSSRVALAEQTKTSWLPPSSVGEANEQMQQLQRLRDKMTTASALLDDCNEQQSFFTANQVLVPTPCLSKLEDLNTRMKLLQIAMDERQKVLCQAGAQQTHENGDDGRTTSNSGTIGPLPNLGQSVKPPWERATTAANVPYYIDHERETTHWDHPEMIELMKGLADLNEIRFSAYRTAMKLRSVQKRLALDRISMSTACESFDRHGLRAQNDKLIDIPDMTTVLHSLYVTIDKIDLTLMLDLAINWILNVYDSQRTGQIRVLSFKVGLVLLCKGHLEEKYRYLFRLVADTDRRADQRRLGLLLHDCIQVPRQLGEVAAFGGSNIEPSVRSCLEQAGISQEAIDGNQDISIELQHFLGWLQHEPQSLVWLPVLHRLAAAEAAKHQAKCNICKEYPIVGFRYRCLKCFNFDMCQKCFFFGRNAKNHKLTHPMHEYCTTTTSTEDVRDFTRALKNKFKSRKYFKKHPRVGYLPVQSVLEGDALESPAPSPQHTTHQLQNDMHSRLEMYASRLAQVEYGGTGSNSTPDSDDEHQLIAQYCQALPGTSNGSAPKSPVQVMAAMDAEQREELEAIIRDLEEENANLQAEYQQLCSKEQSGMPEDSNGMQHSSSSMTGLSGQGEQGQDMMAEAKLLRQHKGRLEARMQILEDHNRQLEAQLQRLRQLLDEPNGGGSSATSSGLPSAPGSALNSKPNTLQTRSVTASQLNTDSPAKMNQQNGHYEHNSKGIMLPGMNSEIQQQHAQLASLAAKHHQHQLSGALNALHQQQQQQLQQQPPQQQRSMMTGNGGMDISGGMQTSGGYLGDDGRPPPPPHSSLMQQQHQQHLNENSSGLVTVITEQELESINDDLEDSSSSNTTNTTTTTTTTATTEKTCVELQK.

The interval 1–230 (MEPGILIDER…YVMCLYHAME (230 aa)) is actin-binding. 2 consecutive Calponin-homology (CH) domains span residues 12 to 116 (HIQK…LEFN) and 127 to 230 (NGVE…HAME). The interval 233-297 (RTRQQEQEQD…SGELKTHSMR (65 aa)) is disordered. The segment covering 267 to 286 (NDQTSLGLYTSDSAGSMEQR) has biased composition (polar residues). 6 Spectrin repeats span residues 307–420 (VEIS…KILM), 423–525 (AEFQ…KLQQ), 851–963 (QDFG…AIEN), 1056–1170 (SHID…LLEH), 1173–1275 (TQLG…LLEQ), and 1381–1483 (SYES…TLER). Disordered stretches follow at residues 1633–1696 (ARNT…VMPD), 1716–1742 (SLNP…SSPA), 1799–1854 (EDSD…ENTS), 1878–1941 (RDIL…EPLV), and 2204–2233 (GPRI…NEPS). Over residues 1663–1679 (SGESPSSAHTSSSESPT) the composition is skewed to low complexity. Residues 1803-1816 (SSVRVDSQGKEMRR) are compositionally biased toward basic and acidic residues. A phosphoserine mark is found at S1832 and S1838. Residues 1834-1843 (NDEDSAEQEE) are compositionally biased toward acidic residues. Over residues 1878–1893 (RDILRDSEEEEPKTPD) the composition is skewed to basic and acidic residues. Positions 2218 to 2233 (SAATMSCRSEYNNEPS) are enriched in polar residues. Spectrin repeat units lie at residues 2237 to 2363 (ALAG…QLKN), 2366 to 2472 (SDSQ…QLHA), 2475 to 2576 (HSLQ…RLES), 2579 to 2712 (EHWN…RLDE), and 2715 to 2819 (TKMR…VLCQ). The disordered stretch occupies residues 2655-2679 (VSDTSDTEANHDSDSRYMSAEEQSR). The segment at 2822–2852 (AQQTHENGDDGRTTSNSGTIGPLPNLGQSVK) is disordered. A WW domain is found at 2849–2882 (QSVKPPWERATTAANVPYYIDHERETTHWDHPEM). A ZZ-type zinc finger spans residues 3107–3163 (KHQAKCNICKEYPIVGFRYRCLKCFNFDMCQKCFFFGRNAKNHKLTHPMHEYCTTTT). Zn(2+) is bound by residues C3112, C3115, C3127, C3130, C3136, C3139, H3149, and H3153. Residue S3207 is modified to Phosphoserine. 4 disordered regions span residues 3316 to 3344 (EQSG…GEQG), 3387 to 3449 (DEPN…KGIM), 3483 to 3545 (LHQQ…QQHL), and 3560 to 3598 (ELES…ELQK). Polar residues-rich tracts occupy residues 3325-3337 (NGMQ…MTGL) and 3408-3439 (ALNS…QQNG). The span at 3485 to 3499 (QQQQQQLQQQPPQQQ) shows a compositional bias: low complexity. Over residues 3505 to 3523 (GNGGMDISGGMQTSGGYLG) the composition is skewed to gly residues. A compositionally biased stretch (low complexity) spans 3534–3545 (SSLMQQQHQQHL). Acidic residues predominate over residues 3560–3570 (ELESINDDLED). Residues 3571–3589 (SSSSNTTNTTTTTTTTATT) are compositionally biased toward low complexity.

In terms of assembly, component of the dystrophin associated protein complex (DAPC). Interacts with Dg, via the Dg WW domain binding sites. Isoform A, isoform F and isoform G are expressed in the midgut endoderm of stage 12 embryos. In stage 16 embryos, expression is also seen in the pericardial cells, cells at the ectoderm segmental border and cells along the midline of the CNS. During embryogenesis, isoform A is also expressed in the visceral mesoderm, muscle attachment sites, mesectodermal cells at the midline, the gut, and throughout muscle fibers. In larvae, isoform A is found in all muscle fibers, but not detectable in the brain or neuropil.

Its subcellular location is the cell membrane. It is found in the sarcolemma. It localises to the cytoplasm. The protein localises to the cytoskeleton. Its function is as follows. Required for the maintenance of appropriate synaptic retrograde communication and the stabilization of muscle cell architecture or physiology. Both det and Dg are required for maintenance of early dpp signaling in the presumptive crossvein. Isoform A is not required to maintain muscle integrity, but plays a role in neuromuscular homeostasis by regulating neurotransmitter release. May play a role in anchoring the cytoskeleton to the plasma membrane. The sequence is that of Dystrophin, isoforms A/C/F/G/H (Dys) from Drosophila melanogaster (Fruit fly).